A 195-amino-acid chain; its full sequence is dTTP/UTP pyrophosphatase (195 aa).

Asp77 functions as the Proton acceptor in the catalytic mechanism.

The protein belongs to the Maf family. YhdE subfamily. Requires a divalent metal cation as cofactor.

The protein localises to the cytoplasm. The catalysed reaction is dTTP + H2O = dTMP + diphosphate + H(+). It carries out the reaction UTP + H2O = UMP + diphosphate + H(+). Functionally, nucleoside triphosphate pyrophosphatase that hydrolyzes dTTP and UTP. May have a dual role in cell division arrest and in preventing the incorporation of modified nucleotides into cellular nucleic acids. This Flavobacterium psychrophilum (strain ATCC 49511 / DSM 21280 / CIP 103535 / JIP02/86) protein is dTTP/UTP pyrophosphatase.